Reading from the N-terminus, the 157-residue chain is UPF0179 protein Mhun_1135 (157 aa).

The protein belongs to the UPF0179 family.

The sequence is that of UPF0179 protein Mhun_1135 from Methanospirillum hungatei JF-1 (strain ATCC 27890 / DSM 864 / NBRC 100397 / JF-1).